The chain runs to 369 residues: Flagellar P-ring protein (369 aa).

The first 22 residues, 1 to 22 (MFNVRQLIATTLLLSCAFAAQA), serve as a signal peptide directing secretion.

Belongs to the FlgI family. As to quaternary structure, the basal body constitutes a major portion of the flagellar organelle and consists of four rings (L,P,S, and M) mounted on a central rod.

The protein resides in the periplasm. It localises to the bacterial flagellum basal body. Its function is as follows. Assembles around the rod to form the L-ring and probably protects the motor/basal body from shearing forces during rotation. This chain is Flagellar P-ring protein, found in Pseudomonas putida (strain ATCC 47054 / DSM 6125 / CFBP 8728 / NCIMB 11950 / KT2440).